A 339-amino-acid polypeptide reads, in one-letter code: Cathepsin B (339 aa).

The N-terminal stretch at 1 to 17 (MWWSLIPLSCLLALTSA) is a signal peptide. Positions 18–79 (HDKPSSHPLS…ERVGFSEDIN (62 aa)) are cleaved as a propeptide — activation peptide. 6 disulfides stabilise this stretch: C93–C122, C105–C150, C141–C207, C142–C146, C179–C211, and C187–C198. Residue C108 is part of the active site. Residue N192 is glycosylated (N-linked (GlcNAc...) asparagine). K220 bears the N6-acetyllysine mark. Catalysis depends on residues H278 and N298. The propeptide occupies 334 to 339 (QYWGRF).

Belongs to the peptidase C1 family. As to quaternary structure, dimer of a heavy chain and a light chain cross-linked by a disulfide bond. Interacts with SRPX2. Directly interacts with SHKBP1. As to expression, expressed in the epithelial cells of the prostate and mammary gland.

It is found in the lysosome. The protein resides in the melanosome. Its subcellular location is the secreted. It localises to the extracellular space. The protein localises to the apical cell membrane. The catalysed reaction is Hydrolysis of proteins with broad specificity for peptide bonds. Preferentially cleaves -Arg-Arg-|-Xaa bonds in small molecule substrates (thus differing from cathepsin L). In addition to being an endopeptidase, shows peptidyl-dipeptidase activity, liberating C-terminal dipeptides.. Its function is as follows. Thiol protease which is believed to participate in intracellular degradation and turnover of proteins. Cleaves matrix extracellular phosphoglycoprotein MEPE. Involved in the solubilization of cross-linked TG/thyroglobulin in the thyroid follicle lumen. Has also been implicated in tumor invasion and metastasis. The sequence is that of Cathepsin B (Ctsb) from Rattus norvegicus (Rat).